The following is a 1831-amino-acid chain: MAEFLDSEAEESEEEEELDVNERKRLKKLKAAVSDSSEEEEDDEERLREELKDLIDDNPIEEDDGSGYDSDGVGSGKKRKKHEDDDLDDRLEDDDYDLIEENLGVKVERRKRFKRLRRIHDNESDGEEQHVDEGLVREQIAEQLFDENDESIGHRSERSHREADDYDDVDTESDADDFIVDDNGRPIAEKKKKRRPIFTDASLQEGQDIFGVDFDYDDFSKYEEDDYEDDSEGDEYDEDLGVGDDTRVKKKKALKKKVVKKTIFDIYEPSELKRGHFTDMDNEIRKTDIPERMQLREVPVTPVPEGSDELDLEAEWIYKYAFCKHTVSEQEKPESREKMRKPPTTVNKIKQTLEFIRNQQLEVPFIAFYRKEYVKPELNIDDLWKVYYYDGIWCQLNERKRKLKVLFEKMRQFQLDTLCADTDQPVPDDVRLILDSDFERLADVQSMEELKDVHMYFLLNYSHELPRMQAEQRRKAIQERREAKARRQAAAAENGDDAAEAIVVPEPEDDDDPELIDYQLKQASNSSPYAVFRKAGICGFAKHFGLTPEQYAENLRDNYQRNEITQESIGPTELAKQYLSPRFMTTDEVIHAAKYVVARQLAQEPLLRKTMREVYFDRARINIRPTKNGMVLIDENSPVYSMKYVAKKPVSDLFGDQFIKLMMAEEEKLLEITFLEEFEGNACANGTPGDYVEESKALYQLDQFAKHVQEWNKLRAECVQLALQKWVIPDLIKELRSTLHEEAQQFVLRSCTGKLYKWLKVAPYKPQLPPDFGYEEWSTLRGIRVLGLAYDPDHSVAAFCAVTTVEGDISDYLRLPNILKRKNSYNLEEKAQKLADLRKLSDFIKMKKPHIVVIGAESRDAQNIQADIKEILHELETSEQFPPIEVEIIDNELAKIYANSKKGESDFKEYPPLLKQAASLARKMQDPLVEYSQLCDADDEILCLRYHPLQERVPREQLLEQLSLQFINRTSEVGLDINLMVQNSRTINLLQYICGLGPRKGQALLKLLKQSNQRLENRTQLVTVCHLGPRVFINCSGFIKIDTSSLGDSTEAYVEVLDGSRVHPETYEWARKMAIDAMEYDDEETNPAGALEEILESPERLKDLDLDAFAVELERQGFGSKSITLYDIRNELSCLYKDYRTPYTKPSAEELFDMLTKETPDSFYVGKCVTAMVTGFTYRRPQGDQLDSANPVRLDSNESWQCPFCHKDDFPELSEVWNHFDANACPGQPSGVRVRLENGLPGFIHIKNLSDRQVRNPEERVRVSQMIHVRIIKIDIDRFSVECSSRTADLKDVNNEWRPRRDNYYDYVTEEQDNRKVSDAKARALKRKIYARRVIAHPSFFNKSYAEVVAMLAEADQGEVALRPSSKSKDHLTATWKVADDIFQHIDVREEGKENDFSLGRSLWIGTEEFEDLDEIIARHIMPMALAARELIQYKYYKPNMVTGDENERDVMEKLLREEKANDPKKIHYFFTASRAMPGKFLLSYLPKTKVRHEYVTVMPEGYRFRGQIFDTVNSLLRWFKEHWLDPTATPASASASNLTPLHLMRPPPTISSSSQTSLGPQAPYSVTGSVTGGTPRSGISSAVGGGGSSAYSITQSITGYGTSGSSAPGAGVSSSHYGSSSTPSFGAINTPYTPSGQTPFMTPYTPHASQTPRYGHNVPSPSSQSSSSQRHHYGSSSGTGSTPRYHDMGGGGGGGVGGGGGSNAYSMQPHHQQRAKENLDWQLANDAWARRRPQQHQSHQSYHAQQQHHHSQQQPHMGMSMNMGITMSLGRGTGGGGGGGYGSTPVNDYSTGGGHNRGMSSKASVRSTPRTNASPHSMNLGDATPLYDEN.

Residues 1–19 are compositionally biased toward acidic residues; sequence MAEFLDSEAEESEEEEELD. Disordered regions lie at residues 1 to 99, 117 to 199, 221 to 240, and 470 to 501; these read MAEF…YDLI, RRIH…PIFT, KYEEDDYEDDSEGDEYDEDL, and AEQRRKAIQERREAKARRQAAAAENGDDAAEA. A coiled-coil region spans residues 7–59; the sequence is SEAEESEEEEELDVNERKRLKKLKAAVSDSSEEEEDDEERLREELKDLIDDNP. Serine 34, serine 36, and serine 37 each carry phosphoserine. Over residues 45–55 the composition is skewed to basic and acidic residues; that stretch reads ERLREELKDLI. The span at 56–66 shows a compositional bias: acidic residues; sequence DDNPIEEDDGS. Phosphoserine is present on residues serine 66, serine 70, and serine 75. Positions 85-99 are enriched in acidic residues; it reads DDLDDRLEDDDYDLI. Composition is skewed to basic and acidic residues over residues 119–140 and 151–163; these read IHDNESDGEEQHVDEGLVREQI and SIGHRSERSHREA. 4 positions are modified to phosphoserine: serine 124, serine 151, serine 156, and serine 159. Composition is skewed to acidic residues over residues 164–180 and 223–240; these read DDYDDVDTESDADDFIV and EEDDYEDDSEGDEYDEDL. Threonine 171 is modified (phosphothreonine). Phosphoserine is present on serine 173. A coiled-coil region spans residues 467-494; sequence RMQAEQRRKAIQERREAKARRQAAAAEN. Positions 470-482 are enriched in basic and acidic residues; sequence AEQRRKAIQERRE. An S1 motif domain is found at 1217–1286; that stretch reads WNHFDANACP…DRFSVECSSR (70 aa). Residues 1329–1440 form the SH2 domain; that stretch reads IYARRVIAHP…LIQYKYYKPN (112 aa). Residues 1531–1542 are compositionally biased toward low complexity; the sequence is PASASASNLTPL. Disordered stretches follow at residues 1531-1587, 1602-1716, and 1730-1831; these read PASA…VGGG, GTSG…QQRA, and ARRR…YDEN. Over residues 1565–1575 the composition is skewed to polar residues; sequence YSVTGSVTGGT. The segment covering 1602–1627 has biased composition (low complexity); that stretch reads GTSGSSAPGAGVSSSHYGSSSTPSFG. Residues 1631-1641 are compositionally biased toward polar residues; the sequence is TPYTPSGQTPF. Over residues 1660–1683 the composition is skewed to low complexity; it reads PSPSSQSSSSQRHHYGSSSGTGST. Residues serine 1661 and serine 1664 each carry the phosphoserine modification. Residues 1689–1703 show a composition bias toward gly residues; that stretch reads MGGGGGGGVGGGGGS. Low complexity predominate over residues 1736 to 1746; that stretch reads QHQSHQSYHAQ. Gly residues predominate over residues 1772-1783; it reads RGTGGGGGGGYG. A compositionally biased stretch (polar residues) spans 1799–1818; the sequence is GMSSKASVRSTPRTNASPHS. Residue serine 1815 is modified to Phosphoserine.

This sequence belongs to the SPT6 family. Self associates. Interacts with RNA polymerase II. Interacts with the FACT complex, which is composed of dre4/Spt16 and Ssrp/Ssrp1. Interacts with the exosome, a complex with 3'-5' exoribonuclease activity which is composed of at least Csl4, Dis3, Mtr3, Rrp4, Rrp6, Rrp40, Rrp42, Rrp46 and Ski6. Interacts with the DRB sensitivity-inducing factor complex (the DSIF complex), which is composed of Spt4 and Spt5.

Its subcellular location is the nucleus. Its function is as follows. Histone H3-H4 chaperone that plays a role in maintenance of chromatin structure during RNA polymerase II transcription elongation. Required for the transcriptional induction of heat shock response genes and for maximal recruitment of two other elongation factors, Spt5 and Paf1, to the induced Hsp70. Plays a critical role in normal fly development throughout the lifecycle. The protein is Transcription elongation factor SPT6 (Spt6) of Drosophila melanogaster (Fruit fly).